The chain runs to 388 residues: Succinate--CoA ligase [ADP-forming] subunit beta (388 aa).

ATP contacts are provided by residues lysine 46, 53–55 (GRG), glutamate 99, cysteine 102, and glutamate 107. Asparagine 199 and aspartate 213 together coordinate Mg(2+). Substrate is bound by residues asparagine 264 and 321–323 (GIV).

It belongs to the succinate/malate CoA ligase beta subunit family. As to quaternary structure, heterotetramer of two alpha and two beta subunits. Mg(2+) serves as cofactor.

The catalysed reaction is succinate + ATP + CoA = succinyl-CoA + ADP + phosphate. The enzyme catalyses GTP + succinate + CoA = succinyl-CoA + GDP + phosphate. It participates in carbohydrate metabolism; tricarboxylic acid cycle; succinate from succinyl-CoA (ligase route): step 1/1. Its function is as follows. Succinyl-CoA synthetase functions in the citric acid cycle (TCA), coupling the hydrolysis of succinyl-CoA to the synthesis of either ATP or GTP and thus represents the only step of substrate-level phosphorylation in the TCA. The beta subunit provides nucleotide specificity of the enzyme and binds the substrate succinate, while the binding sites for coenzyme A and phosphate are found in the alpha subunit. The protein is Succinate--CoA ligase [ADP-forming] subunit beta of Actinobacillus pleuropneumoniae serotype 3 (strain JL03).